The following is a 168-amino-acid chain: G/U mismatch-specific DNA glycosylase (168 aa).

The protein belongs to the uracil-DNA glycosylase (UDG) superfamily. TDG/mug family. As to quaternary structure, binds DNA as a monomer.

Its subcellular location is the cytoplasm. The enzyme catalyses Specifically hydrolyzes mismatched double-stranded DNA and polynucleotides, releasing free uracil.. Excises ethenocytosine and uracil, which can arise by alkylation or deamination of cytosine, respectively, from the corresponding mispairs with guanine in ds-DNA. It is capable of hydrolyzing the carbon-nitrogen bond between the sugar-phosphate backbone of the DNA and the mispaired base. The complementary strand guanine functions in substrate recognition. Required for DNA damage lesion repair in stationary-phase cells. The sequence is that of G/U mismatch-specific DNA glycosylase from Escherichia coli (strain UTI89 / UPEC).